The primary structure comprises 109 residues: MFGKGGMGNLMKQAQQMQDRMQKLQEEIANMEVTGESGAGLVKVTITGSHSVRRVEIDESLMEDDKEMLEDLIAAAFNDAARRVEETQKEKMASVTGGMQLPPGMKMPF.

Disordered regions lie at residues methionine 1–methionine 21 and glutamine 88–phenylalanine 109.

Belongs to the YbaB/EbfC family. As to quaternary structure, homodimer.

The protein resides in the cytoplasm. The protein localises to the nucleoid. Its function is as follows. Binds to DNA and alters its conformation. May be involved in regulation of gene expression, nucleoid organization and DNA protection. The protein is Nucleoid-associated protein VIBHAR_03086 of Vibrio campbellii (strain ATCC BAA-1116).